We begin with the raw amino-acid sequence, 79 residues long: Small ribosomal subunit protein uS17 (79 aa).

The protein belongs to the universal ribosomal protein uS17 family. Part of the 30S ribosomal subunit.

One of the primary rRNA binding proteins, it binds specifically to the 5'-end of 16S ribosomal RNA. In Roseobacter denitrificans (strain ATCC 33942 / OCh 114) (Erythrobacter sp. (strain OCh 114)), this protein is Small ribosomal subunit protein uS17.